Here is a 212-residue protein sequence, read N- to C-terminus: Superoxide dismutase [Fe] 1, chloroplastic (212 aa).

An N-acetylalanine modification is found at Ala2. The Fe cation site is built by His35, His87, Asp169, and His173.

It belongs to the iron/manganese superoxide dismutase family. In terms of assembly, homodimer. Interacts with cpn20/cpn21. Requires Fe cation as cofactor.

The protein localises to the cell membrane. Its subcellular location is the plastid. It is found in the chloroplast membrane. The protein resides in the chloroplast stroma. It carries out the reaction 2 superoxide + 2 H(+) = H2O2 + O2. With respect to regulation, activated by cpn20/cpn21. Destroys superoxide anion radicals which are normally produced within the cells and which are toxic to biological systems. The chain is Superoxide dismutase [Fe] 1, chloroplastic (FSD1) from Arabidopsis thaliana (Mouse-ear cress).